The following is a 136-amino-acid chain: Small cardioactive peptides (136 aa).

The N-terminal stretch at 1-24 is a signal peptide; it reads METSVSRVTVSLTLLVLIICSADA. Residues M33 and M46 each carry the methionine amide modification. A propeptide spans 49-135 (carboxy-terminal peptide); that stretch reads SQMKTETGTD…VLSKLKSLLQ (87 aa).

It belongs to the SCP family. Contains three disulfide bonds. Highly expressed in the buccal ganglion.

The protein resides in the secreted. Its function is as follows. Involved in the stimulation of contractile activity in the gut, the increase of the amplitude of the heart beat, and enhancement of the contractile response of the radula closer muscle. The sequence is that of Small cardioactive peptides from Aplysia californica (California sea hare).